A 314-amino-acid chain; its full sequence is Dual specificity protein phosphatase 2 (314 aa).

The region spanning 23 to 144 (EAERTLLLDC…FQGCCPDLCS (122 aa)) is the Rhodanese domain. Positions 172–313 (GPVEILPYLF…LLQFETQVLC (142 aa)) constitute a Tyrosine-protein phosphatase domain. Residue Cys257 is the Phosphocysteine intermediate of the active site.

The protein belongs to the protein-tyrosine phosphatase family. Non-receptor class dual specificity subfamily. As to quaternary structure, interacts with MAPK14; this interaction does not lead to catalytic activation of DUSP2 and dephosphrylation of MAPK14. Expressed in hematopoietic tissues.

The protein localises to the nucleus. It catalyses the reaction O-phospho-L-tyrosyl-[protein] + H2O = L-tyrosyl-[protein] + phosphate. It carries out the reaction O-phospho-L-threonyl-[protein] + H2O = L-threonyl-[protein] + phosphate. In terms of biological role, dephosphorylates both phosphorylated Thr and Tyr residues in MAPK1, and dephosphorylation of phosphotyrosine is slightly faster than that of phosphothreonine. Can dephosphorylate MAPK1. This is Dual specificity protein phosphatase 2 from Homo sapiens (Human).